The primary structure comprises 447 residues: MTTILKHLPVGQRIGIAFSGGLDTSAALLWMRQKGAVPYAYTANLGQPDEEDYDAIPRRAMEYGAENARLIDCRKQLVAEGIAAIQCGAFHNTTGGLTYFNTTPLGRAVTGTMLVAAMKEDGVNIWGDGSTYKGNDIERFYRYGLLTNAELQIYKPWLDTDFIDELGGRHEMSEFMIACGFDYKMSVEKAYSTDSNMLGATHEAKDLEYLNSSVKIVNPIMGVKFWDESVKIPAEEVTVRFEQGHPVALNGKTFSDDVEMLLEANRIGGRHGLGMSDQIENRIIEAKSRGIYEAPGMALLHIAYERLLTGIHNEDTIEQYHAHGRQLGRLLYQGRWFDSQALMLRDSLQRWVASQITGEVTLELRRGNDYSILNTVSENLTYKPERLTMEKGDSVFSPDDRIGQLTMRNLDITDTREKLFGYAKTGLLSSSATSGVPQVENLENKGQ.

ATP-binding positions include 17-25 (AFSGGLDTS) and A43. Y99 is an L-citrulline binding site. Residues G129 and T131 each contribute to the ATP site. Residues T131, N135, and D136 each contribute to the L-aspartate site. N135 lines the L-citrulline pocket. Residue D136 coordinates ATP. L-citrulline is bound by residues R139 and S192. D194 provides a ligand contact to ATP. 3 residues coordinate L-citrulline: T201, E203, and E280.

This sequence belongs to the argininosuccinate synthase family. Type 2 subfamily. As to quaternary structure, homotetramer.

The protein resides in the cytoplasm. The catalysed reaction is L-citrulline + L-aspartate + ATP = 2-(N(omega)-L-arginino)succinate + AMP + diphosphate + H(+). It participates in amino-acid biosynthesis; L-arginine biosynthesis; L-arginine from L-ornithine and carbamoyl phosphate: step 2/3. The chain is Argininosuccinate synthase from Escherichia coli O1:K1 / APEC.